A 343-amino-acid chain; its full sequence is UPF0324 membrane protein LJ_1117 (343 aa).

A run of 10 helical transmembrane segments spans residues 10–27, 32–54, 64–86, 91–113, 123–145, 157–179, 219–241, 262–284, 288–310, and 317–339; these read FGLAAVMTLICSVAGIFL, YVNLIGALVIALLLGISLQVLPV, IGFISNKFLRLGIILLGFRLNLT, AGIKTILVAMLGVSGTIVLTYWL, LAVLSACGCGICGAAAVMGVSPQ, NEVLAVAVVCVMGTVFTLLEIVI, ALIMKLSRVLLLAPVALIIGYWY, IPWFLGGFILTSILGTFLPFPPV, GLVQAAYVFLGMAMAALGISVNF, and GGTVFGAAAISSTCLMIFMIIMS.

The protein belongs to the UPF0324 family.

The protein resides in the cell membrane. The sequence is that of UPF0324 membrane protein LJ_1117 from Lactobacillus johnsonii (strain CNCM I-12250 / La1 / NCC 533).